Here is a 265-residue protein sequence, read N- to C-terminus: MLLRPLRGWAALALRCFEPGSPGSPASGPGSRRVQRGAWPSDKEREKEKKSVICVEGNIASGKTTCLEFFSNATDIEVLTEPVSKWRNVRGHNPLGLMYQDASRWGLTLQTYVQLTMLDRHTCPQVSSVRLMERSIHSARYIFVENLYRSGKMPEVDYVVLSEWFDWILRNMDVSIDLIVYLRTNPETCYQRLKRRCREEEKVIPLEYLEAIHHLHEEWLIKGSLFPVAAPVLVIEADHHMERMLQLFEQNRDRILTPENRKLGP.

The N-terminal 33 residues, 1-33, are a transit peptide targeting the mitochondrion; that stretch reads MLLRPLRGWAALALRCFEPGSPGSPASGPGSRR. Residues 21–31 are compositionally biased toward low complexity; sequence SPGSPASGPGS. The tract at residues 21-45 is disordered; sequence SPGSPASGPGSRRVQRGAWPSDKER. 57–65 contributes to the ATP binding site; sequence GNIASGKTT. Catalysis depends on glutamate 133, which acts as the Proton acceptor.

It belongs to the DCK/DGK family. In terms of assembly, homodimer.

It localises to the mitochondrion. It catalyses the reaction thymidine + ATP = dTMP + ADP + H(+). It carries out the reaction 2'-deoxycytidine + ATP = dCMP + ADP + H(+). The enzyme catalyses 2'-deoxyuridine + ATP = dUMP + ADP + H(+). Functionally, phosphorylates thymidine, deoxycytidine, and deoxyuridine in the mitochondrial matrix. In non-replicating cells, where cytosolic dNTP synthesis is down-regulated, mtDNA synthesis depends solely on TK2 and DGUOK. The chain is Thymidine kinase 2, mitochondrial (TK2) from Macaca fascicularis (Crab-eating macaque).